The primary structure comprises 456 residues: uncharacterized protein (456 aa).

Positions 3–61 (TIKKNEVKTGKVIDLTHEGHGVVKVDRYPIFIPNALIDEEIKFKLIKVKKNFAIGKLIE) constitute a TRAM domain. [4Fe-4S] cluster contacts are provided by cysteine 74, cysteine 80, cysteine 83, and cysteine 162. Glutamine 286, tyrosine 315, glutamate 336, and aspartate 384 together coordinate S-adenosyl-L-methionine. Residue cysteine 411 is the Nucleophile of the active site.

Belongs to the class I-like SAM-binding methyltransferase superfamily. RNA M5U methyltransferase family.

This is an uncharacterized protein from Staphylococcus epidermidis (strain ATCC 35984 / DSM 28319 / BCRC 17069 / CCUG 31568 / BM 3577 / RP62A).